The sequence spans 151 residues: MKYQQLENLESGWKWAYLVKKHREGEAITRHIENSAAQDAVEQLMKLESEPVKVLEWIDTHMNMQLATRMKQTIRARRKRHFNAEHQHTRKKSIDLEFLVWQRLAALARRRGNTLSETVVQLIEDAERKEKYQNQMSSLKQDLQDILGKDV.

The protein belongs to the MatP family. As to quaternary structure, homodimer.

The protein resides in the cytoplasm. Its function is as follows. Required for spatial organization of the terminus region of the chromosome (Ter macrodomain) during the cell cycle. Prevents early segregation of duplicated Ter macrodomains during cell division. Binds specifically to matS, which is a 13 bp signature motif repeated within the Ter macrodomain. This chain is Macrodomain Ter protein, found in Yersinia enterocolitica serotype O:8 / biotype 1B (strain NCTC 13174 / 8081).